We begin with the raw amino-acid sequence, 403 residues long: Argininosuccinate synthase (403 aa).

Residues 10 to 18 and Ala38 each bind ATP; that span reads AYSGGVDTS. Tyr89 is an L-citrulline binding site. Gly119 provides a ligand contact to ATP. L-aspartate-binding residues include Thr121, Asn125, and Asp126. Asn125 lines the L-citrulline pocket. The L-citrulline site is built by Arg129, Ser177, Ser186, Glu262, and Tyr274.

This sequence belongs to the argininosuccinate synthase family. Type 1 subfamily. As to quaternary structure, homotetramer.

The protein localises to the cytoplasm. The catalysed reaction is L-citrulline + L-aspartate + ATP = 2-(N(omega)-L-arginino)succinate + AMP + diphosphate + H(+). It participates in amino-acid biosynthesis; L-arginine biosynthesis; L-arginine from L-ornithine and carbamoyl phosphate: step 2/3. This Parasynechococcus marenigrum (strain WH8102) protein is Argininosuccinate synthase.